Consider the following 363-residue polypeptide: MSKDATKEISAPTDAKERSKAIETAMSQIEKAFGKGSIMKLGAESKLDVQVVSTGSLSLDLALGVGGIPRGRITEIYGPESGGKTTLALAIVAQAQKAGGTCAFIDAEHALDPVYARALGVNTDELLVSQPDNGEQALEIMELLVRSGAIDVVVVDSVAALTPRAEIEGDMGDSLPGLQARLMSQALRKLTAILSKTGTAAIFINQVREKIGVMYGNPETTTGGRALKFYASVRLDVRKIGQPTKVGNDAVANTVKIKTVKNKVAAPFKEVELALVYGKGFDQLSDLVGLAADMDIIKKAGSFYSYGDERIGQGKEKTIAYIAERPEMEQEIRDRVMAAIRAGNAGEAPALAPAPAAPEAAEA.

Position 78–85 (78–85) interacts with ATP; sequence GPESGGKT.

It belongs to the RecA family.

It is found in the cytoplasm. Its function is as follows. Can catalyze the hydrolysis of ATP in the presence of single-stranded DNA, the ATP-dependent uptake of single-stranded DNA by duplex DNA, and the ATP-dependent hybridization of homologous single-stranded DNAs. It interacts with LexA causing its activation and leading to its autocatalytic cleavage. Probably involved in base excision repair. Following severe irradiation (7 kGy of gamma irradiation) genomic DNA is fragmented. DNA is progressively degraded for the first 1.5 hours after IR, in a step promoted by RecA and counterbalanced by DNA Pol I and Pol III, followed by massive DNA synthesis and genome reassembly in the next hour. Optimal priming of DNA synthesis requires both RecA and RadA, Pol III initiates DNA synthesis while both Pol I and Pol III are required for its continuation. In the absence of RecA the majority of the chromosome is still reconstituted, via either single-strand annealing or non-homologous end joining. In Deinococcus radiodurans (strain ATCC 13939 / DSM 20539 / JCM 16871 / CCUG 27074 / LMG 4051 / NBRC 15346 / NCIMB 9279 / VKM B-1422 / R1), this protein is Protein RecA.